Consider the following 349-residue polypeptide: MALTVNVVGPAPWGFRISGGRDFHTPIIVTKVTERGKAEAADLRPGDIIVAINGESAESMLHAEAQSKIRQSASPLRLQLDRSQTASPGQINGEGSLDMLATRFQGSLRTHHNSQSSQRSACFSPASLSPRPDSPFSTPPPTSPIALSGENVIGCSFQSLTHSPGLAATHHLTYPGQPTSQQAGHSSPSDSTVRVLLHSPGRPSSPRLSSLDLEEDSEVFKMLQENRQGRAAPRQSSSFRLLQEALEAEERGGTPAFVPSSLSPKASLPTSRALATPPKLHTCEKCSVNISNQAVRIQEGRYRHPGCYTCADCGLNLKMRGHFWVGNELYCEKHARQRYSMPGTLSSQA.

The 84-residue stretch at 1–84 (MALTVNVVGP…PLRLQLDRSQ (84 aa)) folds into the PDZ domain. Disordered regions lie at residues 72–95 (SASPLRLQLDRSQTASPGQINGEG) and 108–147 (LRTHHNSQSSQRSACFSPASLSPRPDSPFSTPPPTSPIAL). Polar residues-rich tracts occupy residues 81–90 (DRSQTASPGQ) and 108–121 (LRTHHNSQSSQRSA). Phosphoserine occurs at positions 124, 127, 129, 134, and 137. Phosphothreonine occurs at positions 138 and 142. Phosphoserine occurs at positions 143 and 163. 2 disordered regions span residues 168–212 (ATHH…SSLD) and 250–272 (ERGGTPAFVPSSLSPKASLPTSR). The segment covering 176-192 (GQPTSQQAGHSSPSDST) has biased composition (polar residues). Ser199, Ser204, Ser205, Ser209, Ser210, and Ser263 each carry phosphoserine. Positions 199–211 (SPGRPSSPRLSSL) are enriched in low complexity. The span at 260–270 (SSLSPKASLPT) shows a compositional bias: polar residues. Residues 281 to 341 (HTCEKCSVNI…EKHARQRYSM (61 aa)) enclose the LIM zinc-binding domain.

As to quaternary structure, interacts with alpha-actinins ACTN1 and ACTN4, FLNA and MYH9. Interacts (via LIM zinc-binding domain) with MKRN2. As to expression, highly expressed in cornea and lung. Expressed at intermediate level in sclera and combined tissues of the eye irido-corneal angle. Specifically expressed in the corneal epithelial cells but not in other corneal layers.

The protein localises to the cytoplasm. The protein resides in the cytoskeleton. Functionally, probable adapter protein located at the actin cytoskeleton that promotes cell attachment. Necessary for the migratory capacity of epithelial cells. Overexpression enhances cell adhesion to collagen and fibronectin and suppresses anchorage independent growth. May contribute to tumor cell migratory capacity. The chain is PDZ and LIM domain protein 2 (Pdlim2) from Rattus norvegicus (Rat).